We begin with the raw amino-acid sequence, 261 residues long: Methylmalonyl-CoA decarboxylase (261 aa).

Substrate is bound by residues 64–68 (AGHDI), Gly-110, Thr-132, and Lys-253.

This sequence belongs to the enoyl-CoA hydratase/isomerase family. As to quaternary structure, dimer of homotrimers.

The catalysed reaction is (R)-methylmalonyl-CoA + H(+) = propanoyl-CoA + CO2. Catalyzes the decarboxylation of (R)-methylmalonyl-CoA to propionyl-CoA. Could be part of a pathway that converts succinate to propanoate. The chain is Methylmalonyl-CoA decarboxylase (scpB) from Escherichia coli (strain K12).